The following is a 278-amino-acid chain: MSISPQEVKKLRDATGAGFGDCKKALDAVGGDFELAKKKLREMGIASADKRSGRDAKEGRVFSYVNKERVGLLLISCETDFVAMNGDFVTFGNSLIKQLVESGKDSLDEQQELEIKNLAATIKENIHVSKIYISNIASNELVKNYLHGEQSKIGVFIKLRVDDVLKIEDGSLNSLTMDLALHVAAFAPLYLSVGDVCPNYIKEQEEVFMKQMEASGKPENVIKGIVSGKLKKHLGEITLLEQGFVKDDKLTVKEKIEEVSKSILTKIEIIDFKYFSVG.

The involved in Mg(2+) ion dislocation from EF-Tu stretch occupies residues 79–82 (TDFV).

It belongs to the EF-Ts family.

Its subcellular location is the cytoplasm. Associates with the EF-Tu.GDP complex and induces the exchange of GDP to GTP. It remains bound to the aminoacyl-tRNA.EF-Tu.GTP complex up to the GTP hydrolysis stage on the ribosome. This Borrelia hermsii (strain HS1 / DAH) protein is Elongation factor Ts.